A 609-amino-acid polypeptide reads, in one-letter code: Ataxin-10 homolog (609 aa).

Disordered regions lie at residues Lys-265–Gly-293, Lys-405–Ser-426, and Ser-461–Asn-490. Over residues Ser-266–Thr-292 the composition is skewed to low complexity. Over residues Ser-466–Thr-479 the composition is skewed to low complexity. Over residues Asp-480 to Asn-490 the composition is skewed to polar residues.

The protein belongs to the ATXN10 family.

In terms of biological role, may play a role in the regulation of cytokinesis. The sequence is that of Ataxin-10 homolog (atxn10) from Dictyostelium discoideum (Social amoeba).